The primary structure comprises 107 residues: UPF0473 protein Ldb1604 (107 aa).

The protein belongs to the UPF0473 family.

The protein is UPF0473 protein Ldb1604 of Lactobacillus delbrueckii subsp. bulgaricus (strain ATCC 11842 / DSM 20081 / BCRC 10696 / JCM 1002 / NBRC 13953 / NCIMB 11778 / NCTC 12712 / WDCM 00102 / Lb 14).